A 155-amino-acid polypeptide reads, in one-letter code: Small ribosomal subunit protein uS7 (155 aa).

Belongs to the universal ribosomal protein uS7 family. In terms of assembly, part of the 30S ribosomal subunit. Contacts proteins S9 and S11.

Functionally, one of the primary rRNA binding proteins, it binds directly to 16S rRNA where it nucleates assembly of the head domain of the 30S subunit. Is located at the subunit interface close to the decoding center, probably blocks exit of the E-site tRNA. The chain is Small ribosomal subunit protein uS7 from Thermosipho africanus (strain TCF52B).